The primary structure comprises 302 residues: Recombination-associated protein RdgC (302 aa).

It belongs to the RdgC family.

Its subcellular location is the cytoplasm. The protein localises to the nucleoid. May be involved in recombination. In Actinobacillus pleuropneumoniae serotype 3 (strain JL03), this protein is Recombination-associated protein RdgC.